Here is a 678-residue protein sequence, read N- to C-terminus: ERAD-associated E3 ubiquitin-protein ligase component HRD3A (678 aa).

A signal peptide spans 1 to 25 (MRILSYGIVILSLLVFSFIEFGVHA). The segment at 40–71 (GGDDNGVGESSDFDEFGESEPKSEEELDPGSW) is disordered. Sel1-like repeat units follow at residues 124–159 (PHAQ…AGGN), 242–277 (ANAM…VDKG), 279–313 (PRSM…AKEG), 317–349 (AFNG…AVDN), 353–386 (SGHY…ANAG), 388–422 (PKAF…AERG), 506–537 (AALL…AKSQ), and 540–568 (AQAM…RYYD). N-linked (GlcNAc...) asparagine glycans are attached at residues Asn-298 and Asn-335. The chain crosses the membrane as a helical span at residues 620–640 (VVFEEGNATILTLFVCLITIL).

The protein belongs to the sel-1 family. As to quaternary structure, interacts with OS9.

The protein resides in the endoplasmic reticulum membrane. Functionally, component of the endoplasmic reticulum (ER) quality control system called ER-associated degradation (ERAD) and involved in ubiquitin-dependent degradation of misfolded endoplasmic reticulum proteins. Functions as an ERAD substrate-recruiting factor that recognizes misfolded proteins for the HRD1 E3 ubiquitin ligase complex. Targets the misfolded LRR receptor kinase BRI1. This Arabidopsis thaliana (Mouse-ear cress) protein is ERAD-associated E3 ubiquitin-protein ligase component HRD3A.